The following is a 1151-amino-acid chain: Chromosome partition protein Smc (1151 aa).

An ATP-binding site is contributed by 32-39 (PNGCGKSN). Coiled coils occupy residues 170-218 (ISGL…AARY), 342-379 (IGRL…ALGE), 407-508 (DSRT…REAQ), and 633-994 (LKQL…EGRE). Composition is skewed to basic and acidic residues over residues 421-438 (RARE…RAAE) and 465-480 (DEAR…EARA). Disordered regions lie at residues 421 to 483 (RARE…AQRS), 806 to 826 (SAEL…AAEA), and 862 to 889 (LRAA…AEAR). Over residues 866–889 (QEAEREAERQAGESREARARAEAR) the composition is skewed to basic and acidic residues.

It belongs to the SMC family. Homodimer.

Its subcellular location is the cytoplasm. Its function is as follows. Required for chromosome condensation and partitioning. The polypeptide is Chromosome partition protein Smc (Cereibacter sphaeroides (strain ATCC 17029 / ATH 2.4.9) (Rhodobacter sphaeroides)).